The sequence spans 671 residues: UvrABC system protein B (671 aa).

The Helicase ATP-binding domain maps to 25–412; the sequence is EGIDAGLAHQ…AGRVVEQVVR (388 aa). 38 to 45 lines the ATP pocket; the sequence is GVTGSGKT. The short motif at 91-114 is the Beta-hairpin element; it reads YYDYYQPEAYVPSSDTFIEKDASI. Residues 429 to 595 enclose the Helicase C-terminal domain; that stretch reads QVDDLLSEIH…GVFKDVADIM (167 aa). The tract at residues 600–624 is disordered; sequence VPGSRSKKRKGMAKAAEENARYENE. Residues 614-624 show a composition bias toward basic and acidic residues; it reads AAEENARYENE. Residues 632 to 667 enclose the UVR domain; sequence NKRIRQLEEKMYQLARDLEFEAAAQMRDEIGKLRER.

Belongs to the UvrB family. In terms of assembly, forms a heterotetramer with UvrA during the search for lesions. Interacts with UvrC in an incision complex.

The protein localises to the cytoplasm. In terms of biological role, the UvrABC repair system catalyzes the recognition and processing of DNA lesions. A damage recognition complex composed of 2 UvrA and 2 UvrB subunits scans DNA for abnormalities. Upon binding of the UvrA(2)B(2) complex to a putative damaged site, the DNA wraps around one UvrB monomer. DNA wrap is dependent on ATP binding by UvrB and probably causes local melting of the DNA helix, facilitating insertion of UvrB beta-hairpin between the DNA strands. Then UvrB probes one DNA strand for the presence of a lesion. If a lesion is found the UvrA subunits dissociate and the UvrB-DNA preincision complex is formed. This complex is subsequently bound by UvrC and the second UvrB is released. If no lesion is found, the DNA wraps around the other UvrB subunit that will check the other stand for damage. This Pseudomonas savastanoi pv. phaseolicola (strain 1448A / Race 6) (Pseudomonas syringae pv. phaseolicola (strain 1448A / Race 6)) protein is UvrABC system protein B.